A 724-amino-acid chain; its full sequence is Peroxidase mlt-7 (724 aa).

The signal sequence occupies residues 1-24; that stretch reads MRRLHRNLSLLFLICILNEYRIES. The N-linked (GlcNAc...) asparagine glycan is linked to Asn7. A propeptide spanning residues 25–178 is cleaved from the precursor; it reads QTLSPPITDR…GCVPQLSDVG (154 aa). Positions 42–76 constitute a ShKT domain; sequence CCDHHEWCRFWASIGECNANKDWMTENCQLACGTC. Cys181 and Cys198 are oxidised to a cystine. Residue Asn233 is glycosylated (N-linked (GlcNAc...) asparagine). The active-site Proton acceptor is the His271. Asp272 contacts Ca(2+). Cys284 and Cys294 are disulfide-bonded. The Ca(2+) site is built by Thr335, Tyr337, Asp339, and Ser341. His493 is a heme b binding site. Asn509 and Asn617 each carry an N-linked (GlcNAc...) asparagine glycan. 2 disulfide bridges follow: Cys588–Cys645 and Cys686–Cys710.

This sequence belongs to the peroxidase family. It depends on heme b as a cofactor. In terms of tissue distribution, expressed in the hypodermal cells, specifically the head and seam/body.

It carries out the reaction 2 a phenolic donor + H2O2 = 2 a phenolic radical donor + 2 H2O. Its function is as follows. Plays an essential role in cuticle biogenesis. Required in combination with bli-3 for correct formation of cross-links in cuticle collagens. This is Peroxidase mlt-7 from Caenorhabditis elegans.